Consider the following 442-residue polypeptide: Protein PRRC1-A (442 aa).

The tract at residues methionine 1–alanine 27 is disordered.

This sequence belongs to the PRRC1 family.

The protein localises to the golgi apparatus. The chain is Protein PRRC1-A (prrc1-a) from Xenopus laevis (African clawed frog).